A 179-amino-acid polypeptide reads, in one-letter code: Large ribosomal subunit protein uL6 (179 aa).

The disordered stretch occupies residues 151–179 (RKPEPYKGKGIKYDNEQIRRKAGKSGGKK). Residues 152 to 169 (KPEPYKGKGIKYDNEQIR) are compositionally biased toward basic and acidic residues. Positions 170-179 (RKAGKSGGKK) are enriched in basic residues.

This sequence belongs to the universal ribosomal protein uL6 family. As to quaternary structure, part of the 50S ribosomal subunit.

In terms of biological role, this protein binds to the 23S rRNA, and is important in its secondary structure. It is located near the subunit interface in the base of the L7/L12 stalk, and near the tRNA binding site of the peptidyltransferase center. In Nitratidesulfovibrio vulgaris (strain ATCC 29579 / DSM 644 / CCUG 34227 / NCIMB 8303 / VKM B-1760 / Hildenborough) (Desulfovibrio vulgaris), this protein is Large ribosomal subunit protein uL6.